The following is a 314-amino-acid chain: Coiled-coil domain-containing protein 42 like-2 (314 aa).

2 coiled-coil regions span residues 34–139 (RLLE…RQEK) and 175–233 (NKLL…WESR).

This sequence belongs to the CFAP73 family.

This is Coiled-coil domain-containing protein 42 like-2 from Xenopus laevis (African clawed frog).